The primary structure comprises 153 residues: Peptide methionine sulfoxide reductase MsrA (153 aa).

The active site involves C10.

This sequence belongs to the MsrA Met sulfoxide reductase family.

The enzyme catalyses L-methionyl-[protein] + [thioredoxin]-disulfide + H2O = L-methionyl-(S)-S-oxide-[protein] + [thioredoxin]-dithiol. The catalysed reaction is [thioredoxin]-disulfide + L-methionine + H2O = L-methionine (S)-S-oxide + [thioredoxin]-dithiol. Has an important function as a repair enzyme for proteins that have been inactivated by oxidation. Catalyzes the reversible oxidation-reduction of methionine sulfoxide in proteins to methionine. This is Peptide methionine sulfoxide reductase MsrA from Methanococcoides burtonii (strain DSM 6242 / NBRC 107633 / OCM 468 / ACE-M).